We begin with the raw amino-acid sequence, 86 residues long: Weak neurotoxin 10 (86 aa).

A signal peptide spans Met1–Thr21. Disulfide bonds link Cys24/Cys45, Cys27/Cys32, Cys38/Cys63, Cys67/Cys78, and Cys79/Cys84.

The protein belongs to the three-finger toxin family. Ancestral subfamily. Orphan group II sub-subfamily. In terms of tissue distribution, expressed by the venom gland.

Its subcellular location is the secreted. In terms of biological role, binds with low affinity to muscular (alpha-1-beta-1-delta-epsilon/CHRNA1-CHRNB1-CHRND-CHRNE) and very low affinity to neuronal (alpha-7/CHRNA7) nicotinic acetylcholine receptor (nAChR). The chain is Weak neurotoxin 10 (WNTX10) from Naja sputatrix (Malayan spitting cobra).